Here is a 328-residue protein sequence, read N- to C-terminus: GMP reductase (328 aa).

Cysteine 176 acts as the Thioimidate intermediate in catalysis. Residue 205–228 participates in NADP(+) binding; sequence IIADGGIRTHGDIAKSIRFGASMI.

It belongs to the IMPDH/GMPR family. GuaC type 2 subfamily.

The catalysed reaction is IMP + NH4(+) + NADP(+) = GMP + NADPH + 2 H(+). Catalyzes the irreversible NADPH-dependent deamination of GMP to IMP. It functions in the conversion of nucleobase, nucleoside and nucleotide derivatives of G to A nucleotides, and in maintaining the intracellular balance of A and G nucleotides. In Streptococcus pneumoniae serotype 4 (strain ATCC BAA-334 / TIGR4), this protein is GMP reductase.